We begin with the raw amino-acid sequence, 432 residues long: ATP-dependent RNA helicase RhlB (432 aa).

The Q motif motif lies at 9–37 (QRFADLPLHAEVIQALNENGFEFCTPIQA). In terms of domain architecture, Helicase ATP-binding spans 40-219 (LPVLLKAKDI…YDHMNDPEKV (180 aa)). 53–60 (AQTGTGKT) is a binding site for ATP. The DEAD box motif lies at 165–168 (DEAD). Residues 243–390 (KMRLLLTLME…VSRYDREALL (148 aa)) form the Helicase C-terminal domain. The segment at 395–432 (TPVKIHRKHPTSRTRDGAKGAHRSGGARPPRHRTRRPS) is disordered. A compositionally biased stretch (basic residues) spans 423 to 432 (PPRHRTRRPS).

The protein belongs to the DEAD box helicase family. RhlB subfamily. As to quaternary structure, component of the RNA degradosome, which is a multiprotein complex involved in RNA processing and mRNA degradation.

The protein resides in the cytoplasm. The enzyme catalyses ATP + H2O = ADP + phosphate + H(+). Functionally, DEAD-box RNA helicase involved in RNA degradation. Has RNA-dependent ATPase activity and unwinds double-stranded RNA. The chain is ATP-dependent RNA helicase RhlB from Shewanella denitrificans (strain OS217 / ATCC BAA-1090 / DSM 15013).